We begin with the raw amino-acid sequence, 275 residues long: Phosphate import ATP-binding protein PstB 1 (275 aa).

Residues 22–261 form the ABC transporter domain; that stretch reads IETRDLSVYY…DRTEKIFNSP (240 aa). 54-61 is an ATP binding site; it reads GPSGCGKS.

Belongs to the ABC transporter superfamily. Phosphate importer (TC 3.A.1.7) family. The complex is composed of two ATP-binding proteins (PstB), two transmembrane proteins (PstC and PstA) and a solute-binding protein (PstS).

The protein localises to the cell inner membrane. It carries out the reaction phosphate(out) + ATP + H2O = ADP + 2 phosphate(in) + H(+). Part of the ABC transporter complex PstSACB involved in phosphate import. Responsible for energy coupling to the transport system. The sequence is that of Phosphate import ATP-binding protein PstB 1 from Synechococcus sp. (strain JA-3-3Ab) (Cyanobacteria bacterium Yellowstone A-Prime).